A 320-amino-acid chain; its full sequence is Cytochrome f (320 aa).

Positions 1–35 are cleaved as a signal peptide; the sequence is MQTRNTFSWIREEITRSISVSLMIYIITWASISSA. Positions 36, 56, 59, and 60 each coordinate heme. The helical transmembrane segment at 286 to 306 threads the bilayer; it reads VQGLLFFLGSVVLAQIFLVLK.

The protein belongs to the cytochrome f family. The 4 large subunits of the cytochrome b6-f complex are cytochrome b6, subunit IV (17 kDa polypeptide, petD), cytochrome f and the Rieske protein, while the 4 small subunits are PetG, PetL, PetM and PetN. The complex functions as a dimer. The cofactor is heme.

Its subcellular location is the plastid. The protein resides in the chloroplast thylakoid membrane. In terms of biological role, component of the cytochrome b6-f complex, which mediates electron transfer between photosystem II (PSII) and photosystem I (PSI), cyclic electron flow around PSI, and state transitions. This is Cytochrome f from Crucihimalaya wallichii (Rock-cress).